The following is a 406-amino-acid chain: UPF0754 membrane protein SYNPCC7002_A1087 (406 aa).

Residues 384–404 (IVNLGGVLGFLVGVAQSVILL) form a helical membrane-spanning segment.

It belongs to the UPF0754 family.

Its subcellular location is the cell inner membrane. The chain is UPF0754 membrane protein SYNPCC7002_A1087 from Picosynechococcus sp. (strain ATCC 27264 / PCC 7002 / PR-6) (Agmenellum quadruplicatum).